A 136-amino-acid chain; its full sequence is Small ribosomal subunit protein bS16 (136 aa).

Positions Thr-114–Lys-123 are enriched in basic residues. A disordered region spans residues Thr-114 to Gly-136.

It belongs to the bacterial ribosomal protein bS16 family.

The protein is Small ribosomal subunit protein bS16 of Chlorobium chlorochromatii (strain CaD3).